A 406-amino-acid polypeptide reads, in one-letter code: Probable peptidoglycan glycosyltransferase FtsW (406 aa).

Transmembrane regions (helical) follow at residues 22 to 42 (LWFV…VASA), 56 to 76 (FFMG…FMML), 86 to 106 (WGIL…VPGI), 116 to 136 (WINL…CMVV), 153 to 173 (LIGF…LLME), 186 to 206 (VIAL…IVIM), 280 to 300 (IWVE…FALM), 318 to 338 (FAGY…IINV), and 352 to 372 (LPLI…LFVV). A compositionally biased stretch (basic and acidic residues) spans 383 to 397 (SKGGESEERKRKSDE). Residues 383 to 406 (SKGGESEERKRKSDESIDDGEALA) form a disordered region.

It belongs to the SEDS family. FtsW subfamily.

It localises to the cell inner membrane. The enzyme catalyses [GlcNAc-(1-&gt;4)-Mur2Ac(oyl-L-Ala-gamma-D-Glu-L-Lys-D-Ala-D-Ala)](n)-di-trans,octa-cis-undecaprenyl diphosphate + beta-D-GlcNAc-(1-&gt;4)-Mur2Ac(oyl-L-Ala-gamma-D-Glu-L-Lys-D-Ala-D-Ala)-di-trans,octa-cis-undecaprenyl diphosphate = [GlcNAc-(1-&gt;4)-Mur2Ac(oyl-L-Ala-gamma-D-Glu-L-Lys-D-Ala-D-Ala)](n+1)-di-trans,octa-cis-undecaprenyl diphosphate + di-trans,octa-cis-undecaprenyl diphosphate + H(+). The protein operates within cell wall biogenesis; peptidoglycan biosynthesis. Peptidoglycan polymerase that is essential for cell division. The sequence is that of Probable peptidoglycan glycosyltransferase FtsW from Marinomonas mediterranea (strain ATCC 700492 / JCM 21426 / NBRC 103028 / MMB-1).